A 592-amino-acid chain; its full sequence is Aspartate--tRNA(Asp/Asn) ligase (592 aa).

Glu-176 lines the L-aspartate pocket. An aspartate region spans residues 200–203 (QLYK). L-aspartate is bound at residue Arg-222. Residues 222-224 (RDE) and Gln-231 contribute to the ATP site. Position 452 (His-452) interacts with L-aspartate. Glu-486 is a binding site for ATP. Residue Arg-493 participates in L-aspartate binding. 538–541 (GVDR) lines the ATP pocket.

It belongs to the class-II aminoacyl-tRNA synthetase family. Type 1 subfamily. As to quaternary structure, homodimer.

It localises to the cytoplasm. The enzyme catalyses tRNA(Asx) + L-aspartate + ATP = L-aspartyl-tRNA(Asx) + AMP + diphosphate. Functionally, aspartyl-tRNA synthetase with relaxed tRNA specificity since it is able to aspartylate not only its cognate tRNA(Asp) but also tRNA(Asn). Reaction proceeds in two steps: L-aspartate is first activated by ATP to form Asp-AMP and then transferred to the acceptor end of tRNA(Asp/Asn). The chain is Aspartate--tRNA(Asp/Asn) ligase from Rhodopirellula baltica (strain DSM 10527 / NCIMB 13988 / SH1).